The sequence spans 39 residues: Photosystem II reaction center protein L (39 aa).

Residues 18 to 38 (SLYLGLLLVFVMGILFSSYFF) form a helical membrane-spanning segment.

The protein belongs to the PsbL family. In terms of assembly, PSII is composed of 1 copy each of membrane proteins PsbA, PsbB, PsbC, PsbD, PsbE, PsbF, PsbH, PsbI, PsbJ, PsbK, PsbL, PsbM, PsbT, PsbX, PsbY, Psb30/Ycf12, peripheral proteins PsbO, CyanoQ (PsbQ), PsbU, PsbV and a large number of cofactors. It forms dimeric complexes.

The protein resides in the cellular thylakoid membrane. Functionally, one of the components of the core complex of photosystem II (PSII). PSII is a light-driven water:plastoquinone oxidoreductase that uses light energy to abstract electrons from H(2)O, generating O(2) and a proton gradient subsequently used for ATP formation. It consists of a core antenna complex that captures photons, and an electron transfer chain that converts photonic excitation into a charge separation. This subunit is found at the monomer-monomer interface and is required for correct PSII assembly and/or dimerization. The protein is Photosystem II reaction center protein L of Prochlorococcus marinus (strain NATL2A).